The following is an 897-amino-acid chain: Patched domain-containing protein 1 (897 aa).

A helical transmembrane segment spans residues 25 to 45; the sequence is PVFFLTVPAVLTIIFGSTVLS. N-linked (GlcNAc...) asparagine glycosylation is found at N132, N167, and N179. The next 2 membrane-spanning stretches (helical) occupy residues 271–291 and 306–326; these read GVLAKSEVLVSLVLVLLAATI and GLLGVLTICIANVTAAGIFFI. The SSD domain occupies 273 to 433; it reads LAKSEVLVSL…FSFYGSCLVF (161 aa). An N-linked (GlcNAc...) asparagine glycan is attached at N332. Helical transmembrane passes span 335-355, 377-397, 414-434, and 506-526; these read LLGIPFFAMGHGTKGVFELLA, VMVCYTMTSSLYIITFGMGAS, VAVLVNYFYVFSFYGSCLVFA, and PFVVILYLIYASFSFMGCLQI. N-linked (GlcNAc...) asparagine glycosylation is found at N572 and N603. Transmembrane regions (helical) follow at residues 701–721, 727–747, and 754–774; these read PILTSGFSVLTILILTFFLVI, FWLILTVTSVELGVLGLMTLW, and ISILCLIYTLNFAMDHCAPHL. N803 carries an N-linked (GlcNAc...) asparagine glycan. The next 2 membrane-spanning stretches (helical) occupy residues 806–826 and 831–851; these read CFVIGIMPLLFVPSNLTYTLF and LTAGCTVLHCFVILPVFLTFF. Basic residues predominate over residues 856-866; the sequence is KRHKKKKRAKR. Residues 856 to 881 are disordered; that stretch reads KRHKKKKRAKRKEREREREREREREE. The span at 867-881 shows a compositional bias: basic and acidic residues; the sequence is KEREREREREREREE.

This sequence belongs to the patched family.

The protein resides in the cell membrane. It is found in the cell projection. It localises to the dendritic spine. Its function is as follows. Can bind cholesterol in vitro. The protein is Patched domain-containing protein 1 (ptchd1) of Danio rerio (Zebrafish).